The chain runs to 95 residues: Phosphoribosyl-ATP pyrophosphatase (95 aa).

It belongs to the PRA-PH family.

Its subcellular location is the cytoplasm. The enzyme catalyses 1-(5-phospho-beta-D-ribosyl)-ATP + H2O = 1-(5-phospho-beta-D-ribosyl)-5'-AMP + diphosphate + H(+). The protein operates within amino-acid biosynthesis; L-histidine biosynthesis; L-histidine from 5-phospho-alpha-D-ribose 1-diphosphate: step 2/9. In Sulfolobus acidocaldarius (strain ATCC 33909 / DSM 639 / JCM 8929 / NBRC 15157 / NCIMB 11770), this protein is Phosphoribosyl-ATP pyrophosphatase.